A 608-amino-acid polypeptide reads, in one-letter code: Phosphogluconate dehydratase (608 aa).

Residues C154 and C221 each coordinate [4Fe-4S] cluster.

Belongs to the IlvD/Edd family. The cofactor is [4Fe-4S] cluster.

It catalyses the reaction 6-phospho-D-gluconate = 2-dehydro-3-deoxy-6-phospho-D-gluconate + H2O. The protein operates within carbohydrate metabolism; Entner-Doudoroff pathway. In terms of biological role, catalyzes the dehydration of 6-phospho-D-gluconate to 2-dehydro-3-deoxy-6-phospho-D-gluconate. The polypeptide is Phosphogluconate dehydratase (Helicobacter pylori (strain ATCC 700392 / 26695) (Campylobacter pylori)).